A 475-amino-acid chain; its full sequence is Aminodeoxychorismate synthase component 1 (475 aa).

The protein belongs to the anthranilate synthase component I family. Monomer. Heterodimer consisting of two non-identical subunits: a glutamine amidotransferase subunit (PabA) and a aminodeoxychorismate synthase subunit (PabB). The cofactor is Mg(2+).

The catalysed reaction is chorismate + L-glutamine = 4-amino-4-deoxychorismate + L-glutamate. It functions in the pathway cofactor biosynthesis; tetrahydrofolate biosynthesis; 4-aminobenzoate from chorismate: step 1/2. Functionally, part of a heterodimeric complex that catalyzes the two-step biosynthesis of 4-amino-4-deoxychorismate (ADC), a precursor of p-aminobenzoate (PABA) and tetrahydrofolate. In the first step, a glutamine amidotransferase (PabA) generates ammonia as a substrate that, along with chorismate, is used in the second step, catalyzed by aminodeoxychorismate synthase (PabB) to produce ADC. The protein is Aminodeoxychorismate synthase component 1 (pabB) of Streptomyces lividans.